Consider the following 442-residue polypeptide: Histidine--tRNA ligase (442 aa).

The protein belongs to the class-II aminoacyl-tRNA synthetase family. As to quaternary structure, homodimer.

The protein localises to the cytoplasm. The catalysed reaction is tRNA(His) + L-histidine + ATP = L-histidyl-tRNA(His) + AMP + diphosphate + H(+). The polypeptide is Histidine--tRNA ligase (hisS) (Helicobacter pylori (strain J99 / ATCC 700824) (Campylobacter pylori J99)).